We begin with the raw amino-acid sequence, 318 residues long: Olfactory receptor 13C5 (318 aa).

Residues 1–25 (MEWENHTILVEFFLKGLSGHPRLEL) are Extracellular-facing. A glycan (N-linked (GlcNAc...) asparagine) is linked at Asn-5. A helical transmembrane segment spans residues 26–46 (LFFVLIFIMYVVILLGNGTLI). The Cytoplasmic segment spans residues 47-54 (LISILDPH). The helical transmembrane segment at 55–75 (LHTPMYFFLGNLSFLDICYTT) threads the bilayer. Topologically, residues 76–99 (TSIPSTLVSFLSERKTISLSGCAV) are extracellular. A disulfide bridge connects residues Cys-97 and Cys-189. Residues 100–120 (QMFLSLAMGTTECVLLGVMAF) traverse the membrane as a helical segment. Residues 121 to 139 (DRYVAICNPLRYPIIMSKD) lie on the Cytoplasmic side of the membrane. The chain crosses the membrane as a helical span at residues 140 to 160 (AYVPMAAGSWIIGAVNSAVQT). The Extracellular segment spans residues 161 to 197 (VFVVQLPFCRNNIINHFTCEILAVMKLACADISGNEF). A helical membrane pass occupies residues 198–217 (ILLVTTTLFLLTPLLLIIVS). The Cytoplasmic portion of the chain corresponds to 218-237 (YTLIILSIFKISSSEGRSKP). A helical transmembrane segment spans residues 238 to 258 (SSTCSARLTVVITFCGTIFLM). The Extracellular portion of the chain corresponds to 259–277 (YMKPKSQETLNSDDLDATD). A helical membrane pass occupies residues 278–298 (KLIFIFYRVMTPMMNPLIYSL). The Cytoplasmic segment spans residues 299-318 (RNKDVKEAVKHLLRRKNFNK).

It belongs to the G-protein coupled receptor 1 family.

It localises to the cell membrane. Its function is as follows. Odorant receptor. The chain is Olfactory receptor 13C5 (OR13C5) from Homo sapiens (Human).